A 150-amino-acid polypeptide reads, in one-letter code: D-aminoacyl-tRNA deacylase (150 aa).

The short motif at 138–139 (GP) is the Gly-cisPro motif, important for rejection of L-amino acids element.

The protein belongs to the DTD family. As to quaternary structure, homodimer.

The protein localises to the cytoplasm. It catalyses the reaction glycyl-tRNA(Ala) + H2O = tRNA(Ala) + glycine + H(+). It carries out the reaction a D-aminoacyl-tRNA + H2O = a tRNA + a D-alpha-amino acid + H(+). In terms of biological role, an aminoacyl-tRNA editing enzyme that deacylates mischarged D-aminoacyl-tRNAs. Also deacylates mischarged glycyl-tRNA(Ala), protecting cells against glycine mischarging by AlaRS. Acts via tRNA-based rather than protein-based catalysis; rejects L-amino acids rather than detecting D-amino acids in the active site. By recycling D-aminoacyl-tRNA to D-amino acids and free tRNA molecules, this enzyme counteracts the toxicity associated with the formation of D-aminoacyl-tRNA entities in vivo and helps enforce protein L-homochirality. The polypeptide is D-aminoacyl-tRNA deacylase (Natranaerobius thermophilus (strain ATCC BAA-1301 / DSM 18059 / JW/NM-WN-LF)).